A 202-amino-acid chain; its full sequence is Indolepyruvate oxidoreductase subunit IorB (202 aa).

As to quaternary structure, heterodimer of the IorA and IorB subunits.

It catalyses the reaction indole-3-pyruvate + 2 oxidized [2Fe-2S]-[ferredoxin] + CoA = (indol-3-yl)acetyl-CoA + 2 reduced [2Fe-2S]-[ferredoxin] + CO2 + H(+). Its function is as follows. Catalyzes the ferredoxin-dependent oxidative decarboxylation of arylpyruvates. In Pyrococcus horikoshii (strain ATCC 700860 / DSM 12428 / JCM 9974 / NBRC 100139 / OT-3), this protein is Indolepyruvate oxidoreductase subunit IorB (iorB).